The chain runs to 486 residues: Glutamyl-tRNA(Gln) amidotransferase subunit A (486 aa).

Catalysis depends on charge relay system residues Lys80 and Ser155. Ser179 functions as the Acyl-ester intermediate in the catalytic mechanism.

This sequence belongs to the amidase family. GatA subfamily. Heterotrimer of A, B and C subunits.

The enzyme catalyses L-glutamyl-tRNA(Gln) + L-glutamine + ATP + H2O = L-glutaminyl-tRNA(Gln) + L-glutamate + ADP + phosphate + H(+). Functionally, allows the formation of correctly charged Gln-tRNA(Gln) through the transamidation of misacylated Glu-tRNA(Gln) in organisms which lack glutaminyl-tRNA synthetase. The reaction takes place in the presence of glutamine and ATP through an activated gamma-phospho-Glu-tRNA(Gln). The protein is Glutamyl-tRNA(Gln) amidotransferase subunit A of Geobacillus sp. (strain WCH70).